Reading from the N-terminus, the 398-residue chain is Proteasome-activating nucleotidase (398 aa).

A coiled-coil region spans residues 3–60 (DSEIQYLLEKLKKLEEDYYKLRELYRRLEDEKKFIESERIRYEREVRRLRSEVERLRS). Residues 185–190 (GTGKTL) and His324 contribute to the ATP site. The tract at residues 396-398 (MFV) is docks into pockets in the proteasome alpha-ring to cause gate opening.

It belongs to the AAA ATPase family. As to quaternary structure, homohexamer. The hexameric complex has a two-ring architecture resembling a top hat that caps the 20S proteasome core at one or both ends. Upon ATP-binding, the C-terminus of PAN interacts with the alpha-rings of the proteasome core by binding to the intersubunit pockets.

The protein resides in the cytoplasm. Its function is as follows. ATPase which is responsible for recognizing, binding, unfolding and translocation of substrate proteins into the archaeal 20S proteasome core particle. Is essential for opening the gate of the 20S proteasome via an interaction with its C-terminus, thereby allowing substrate entry and access to the site of proteolysis. Thus, the C-termini of the proteasomal ATPase function like a 'key in a lock' to induce gate opening and therefore regulate proteolysis. Unfolding activity requires energy from ATP hydrolysis, whereas ATP binding alone promotes ATPase-20S proteasome association which triggers gate opening, and supports translocation of unfolded substrates. The polypeptide is Proteasome-activating nucleotidase (Archaeoglobus fulgidus (strain ATCC 49558 / DSM 4304 / JCM 9628 / NBRC 100126 / VC-16)).